We begin with the raw amino-acid sequence, 199 residues long: B3 domain-containing protein Os06g0107800 (199 aa).

The disordered stretch occupies residues 13-32 (QLQGGGGGHGGGGGGGGGER). Positions 15–29 (QGGGGGHGGGGGGGG) are enriched in gly residues. Residues 37-141 (FEKVVTPSDV…RLFIDCRKRA (105 aa)) constitute a DNA-binding region (TF-B3).

It localises to the nucleus. This Oryza sativa subsp. japonica (Rice) protein is B3 domain-containing protein Os06g0107800.